The primary structure comprises 188 residues: Protein TIFY 9 (188 aa).

The segment at 20–41 (DADDRHAKSGGSSASSSSSIRG) is disordered. Positions 28 to 38 (SGGSSASSSSS) are enriched in low complexity. Positions 80–114 (AAAAAAPMTLFYNGSVAVFDVSHDKAEAIMRMATE) constitute a Tify domain. The Jas motif lies at 135 to 160 (PLTRTKSLQRFLSKRKERLTSLGPYQ). The tract at residues 156 to 188 (LGPYQVGGPAAVGATTSTTTKSFLAKEEEHTAS) is disordered. Over residues 179 to 188 (LAKEEEHTAS) the composition is skewed to basic and acidic residues.

It belongs to the TIFY/JAZ family. Post-translationally, ubiquitinated. Targeted for degradation by the SCF(COI1) E3 ubiquitin ligase-proteasome pathway during jasmonate signaling.

Its function is as follows. Repressor of jasmonate responses. The protein is Protein TIFY 9 of Oryza sativa subsp. indica (Rice).